The sequence spans 636 residues: Outer spore wall assembly protein SHE10 (636 aa).

The first 23 residues, 1 to 23 (MRLVSKLLKALLVLLLAFGSVRY), serve as a signal peptide directing secretion. Coiled-coil stretches lie at residues 433–460 (RAHL…LFEE) and 551–584 (KANL…TEFE). The tract at residues 565–607 (QQREKEKAESASMKASTEFELSSSSFSSSSPSTASSCTASSTS) is disordered. A compositionally biased stretch (low complexity) spans 579 to 607 (ASTEFELSSSSFSSSSPSTASSCTASSTS).

Belongs to the SHE10 family. As to quaternary structure, component of the mitochondria-localized RNase mitochondrial RNA-processing (RNase MRP) composed of one single RNA encoded by the NME1 gene and at least 31 proteins. Absent in the nucleus-localized RNase MRP (NuMRP).

Its subcellular location is the mitochondrion. Functionally, involved in spore wall assembly. May be a component of the mitochondrial RNase MRP (MtMRP), a ribonucleoprotein endoribonuclease involved in the cleaving RNA transcripts to generate primers for DNA replication in mitochondria. This chain is Outer spore wall assembly protein SHE10, found in Kluyveromyces lactis (strain ATCC 8585 / CBS 2359 / DSM 70799 / NBRC 1267 / NRRL Y-1140 / WM37) (Yeast).